We begin with the raw amino-acid sequence, 353 residues long: MAQAKMQHPVSWVIFAGMAALLLFQGVPVRSGDATFPKAMDNVTVRQGESATLRCSVDNRVTRVAWLNRSSILYAGNDKWCLDPRVVLLANTKTQYSIQIHDVDVYDEGPYTCSVQTDNHPKTSRVHLIVQVSPKITETSSDISINEGGNVSLTCIATGRPDPTITWRHISPKAVGFISEDEYLEITGITREQSGEYECSASNDVAAPVVQRVKVTVNYPPYISDAKSTGVPVGQKGILMCEASAVPSADFQWYKDDKRLAEGQKGLKVENKAFFSRLTFFNVSEQDYGNYTCVASNQLGNTNASMILYEETTTALTPWKGPGAVHDGNSGAWRRGSCAWLLALPLAQLARQF.

An N-terminal signal peptide occupies residues 1–28 (MAQAKMQHPVSWVIFAGMAALLLFQGVP). Ig-like C2-type domains lie at 37–124 (PKAM…PKTS), 134–216 (PKIT…VKVT), and 220–314 (PPYI…ETTT). N-linked (GlcNAc...) asparagine glycans are attached at residues Asn-42, Asn-68, and Asn-150. Cys-55 and Cys-113 are joined by a disulfide. 2 cysteine pairs are disulfide-bonded: Cys-155-Cys-199 and Cys-241-Cys-293. Asn-282, Asn-290, and Asn-303 each carry an N-linked (GlcNAc...) asparagine glycan. The GPI-anchor amidated serine moiety is linked to residue Ser-330. Residues 331–353 (GAWRRGSCAWLLALPLAQLARQF) constitute a propeptide, removed in mature form.

Belongs to the immunoglobulin superfamily. IgLON family. Interacts with NEGR1. Found on the dendrites, somata and axons of developing Purkinje cells. Undetectable on other neurons like Golgi or granule cells.

It is found in the cell membrane. Its function is as follows. It may be a cellular address molecule specific to Purkinje cells. It may represent a receptor or a subunit of a receptor complex. This Gallus gallus (Chicken) protein is Protein CEPU-1.